The sequence spans 226 residues: Potassium/proton antiporter CemA (226 aa).

3 consecutive transmembrane segments (helical) span residues phenylalanine 7 to phenylalanine 27, isoleucine 111 to leucine 131, and isoleucine 186 to isoleucine 206.

The protein belongs to the CemA family.

It is found in the plastid. Its subcellular location is the chloroplast inner membrane. It carries out the reaction K(+)(in) + H(+)(out) = K(+)(out) + H(+)(in). In terms of biological role, contributes to K(+)/H(+) antiport activity by supporting proton efflux to control proton extrusion and homeostasis in chloroplasts in a light-dependent manner to modulate photosynthesis. Prevents excessive induction of non-photochemical quenching (NPQ) under continuous-light conditions. Indirectly promotes efficient inorganic carbon uptake into chloroplasts. The polypeptide is Potassium/proton antiporter CemA (Buxus microphylla (Littleleaf boxwood)).